Reading from the N-terminus, the 217-residue chain is Large ribosomal subunit protein uL1 (217 aa).

It belongs to the universal ribosomal protein uL1 family.

In Spodoptera frugiperda (Fall armyworm), this protein is Large ribosomal subunit protein uL1 (RpL10A).